The sequence spans 572 residues: Hexokinase (572 aa).

Positions 49–492 constitute a Hexokinase domain; the sequence is DEPPISLETV…SGKGAALITA (444 aa). The hexokinase small subdomain stretch occupies residues 105–237; the sequence is NGTEEGRFIA…DIKVEVVALI (133 aa). Residues 116–120 and Ser185 each bind D-glucose 6-phosphate; that span reads DLGGT. An ATP-binding site is contributed by 116 to 121; the sequence is DLGGTN. Residues 185-186, 202-203, and 238-239 each bind substrate; these read SY, TK, and ND. The interval 238–481 is hexokinase large subdomain; the sequence is NDTVGTMVAA…LKFKLLQTAD (244 aa). D-glucose 6-phosphate is bound by residues Asp239 and Thr263. Thr263 contacts ATP. Residues Asn266, Glu297, and Asp331 each coordinate substrate. ATP is bound by residues 336–337, 373–377, and 448–452; these read GK, TKYIS, and STYKY. Residues 446 to 448 and Ser483 contribute to the D-glucose 6-phosphate site; that span reads DGS.

The protein belongs to the hexokinase family.

It catalyses the reaction a D-hexose + ATP = a D-hexose 6-phosphate + ADP + H(+). The catalysed reaction is D-mannose + ATP = D-mannose 6-phosphate + ADP + H(+). The enzyme catalyses D-fructose + ATP = D-fructose 6-phosphate + ADP + H(+). It carries out the reaction D-glucose + ATP = D-glucose 6-phosphate + ADP + H(+). It participates in carbohydrate metabolism; hexose metabolism. Its pathway is carbohydrate degradation; glycolysis; D-glyceraldehyde 3-phosphate and glycerone phosphate from D-glucose: step 1/4. Activated by glucose-6-phosphate. Inhibited by N-acetylglucosamine, glucosamine, mannoheptulose and ADP. Functionally, active against glucose, fructose, mannose, maltose and galactose. The protein is Hexokinase of Brugia malayi (Filarial nematode worm).